Here is a 176-residue protein sequence, read N- to C-terminus: Ribosome maturation factor RimM (176 aa).

The 76-residue stretch at 99–174 folds into the PRC barrel domain; it reads KNEFYITDLI…IVLIQPEIWN (76 aa).

The protein belongs to the RimM family. As to quaternary structure, binds ribosomal protein uS19.

It is found in the cytoplasm. An accessory protein needed during the final step in the assembly of 30S ribosomal subunit, possibly for assembly of the head region. Essential for efficient processing of 16S rRNA. May be needed both before and after RbfA during the maturation of 16S rRNA. It has affinity for free ribosomal 30S subunits but not for 70S ribosomes. In Leptospira interrogans serogroup Icterohaemorrhagiae serovar copenhageni (strain Fiocruz L1-130), this protein is Ribosome maturation factor RimM.